A 194-amino-acid polypeptide reads, in one-letter code: 5-formyltetrahydrofolate cyclo-ligase (194 aa).

ATP contacts are provided by residues 6 to 10 (KSQLR), 139 to 146 (GRGAGFYD), and Asp177.

It belongs to the 5-formyltetrahydrofolate cyclo-ligase family.

The enzyme catalyses (6S)-5-formyl-5,6,7,8-tetrahydrofolate + ATP = (6R)-5,10-methenyltetrahydrofolate + ADP + phosphate. The protein operates within one-carbon metabolism; tetrahydrofolate interconversion. Functionally, involved in the removal of 5-formyltetrahydrofolate. In vitro, it is a potent inhibitor of various folate-dependent enzymes in the C1 metabolism network and in vivo it might function as a folate storage. 5-formyltetrahydrofolate is also used as an antifolate rescue agent in cancer chemotherapy. Catalyzes the irreversible ATP-dependent transformation of 5-formyltetrahydrofolate (5-CHO-THF) to form 5,10-methenyltetrahydrofolate (5,10-CH=THF). The reverse reaction is catalyzed by the serine hydroxymethyltransferase GlyA (SHMT). The polypeptide is 5-formyltetrahydrofolate cyclo-ligase (Mycolicibacterium smegmatis (strain ATCC 700084 / mc(2)155) (Mycobacterium smegmatis)).